The sequence spans 351 residues: N-acetyl-gamma-glutamyl-phosphate reductase (351 aa).

The active site involves Cys-154.

The protein belongs to the NAGSA dehydrogenase family. Type 1 subfamily.

The protein resides in the cytoplasm. It catalyses the reaction N-acetyl-L-glutamate 5-semialdehyde + phosphate + NADP(+) = N-acetyl-L-glutamyl 5-phosphate + NADPH + H(+). It functions in the pathway amino-acid biosynthesis; L-arginine biosynthesis; N(2)-acetyl-L-ornithine from L-glutamate: step 3/4. In terms of biological role, catalyzes the NADPH-dependent reduction of N-acetyl-5-glutamyl phosphate to yield N-acetyl-L-glutamate 5-semialdehyde. The protein is N-acetyl-gamma-glutamyl-phosphate reductase of Prochlorococcus marinus (strain MIT 9215).